The sequence spans 877 residues: DNA polymerase I (877 aa).

One can recognise a 5'-3' exonuclease domain in the interval 180-270; that stretch reads TPAQFIDLKA…EIGLDDTLLK (91 aa). Positions 308 to 468 constitute a 3'-5' exonuclease domain; that stretch reads DEIDFEIVTD…AKEKMMAELL (161 aa).

The protein belongs to the DNA polymerase type-A family. As to quaternary structure, single-chain monomer with multiple functions.

It carries out the reaction DNA(n) + a 2'-deoxyribonucleoside 5'-triphosphate = DNA(n+1) + diphosphate. Its function is as follows. In addition to polymerase activity, this DNA polymerase exhibits 3'-5' and 5'-3' exonuclease activity. This Lactococcus lactis subsp. lactis (strain IL1403) (Streptococcus lactis) protein is DNA polymerase I (polA).